We begin with the raw amino-acid sequence, 471 residues long: 6-phosphofructo-2-kinase/fructose-2,6-bisphosphatase 1 (471 aa).

An N-acetylserine modification is found at Ser-2. Positions 2–250 (SPEMGELTQT…VYYLMNIHVT (249 aa)) are 6-phosphofructo-2-kinase. Ser-33 bears the Phosphoserine; by PKA mark. 49–57 (GLPARGKTY) is a binding site for ATP. 2 residues coordinate beta-D-fructose 6-phosphate: Arg-82 and Arg-105. Residue Asp-131 is part of the active site. The beta-D-fructose 6-phosphate site is built by Thr-133 and Arg-139. Ser-141 carries the post-translational modification Phosphoserine. Residue Cys-161 is part of the active site. 170-175 (NIRQVK) contributes to the ATP binding site. Beta-D-fructose 6-phosphate-binding residues include Lys-175, Arg-196, and Tyr-200. The fructose-2,6-bisphosphatase stretch occupies residues 251 to 471 (PRSIYLCRHG…EALDTVPAHY (221 aa)). Beta-D-fructose 2,6-bisphosphate is bound at residue Arg-258. Catalysis depends on His-259, which acts as the Tele-phosphohistidine intermediate. Beta-D-fructose 2,6-bisphosphate-binding residues include Asn-265, Gly-271, and Arg-308. Residue Glu-328 is the Proton donor/acceptor of the active site. 6 residues coordinate beta-D-fructose 2,6-bisphosphate: Tyr-339, Arg-353, Lys-357, Tyr-368, Gln-394, and Arg-398. 350-353 (FALR) is an ATP binding site. ATP-binding positions include 394 to 398 (QAVMR) and Tyr-430.

This sequence in the C-terminal section; belongs to the phosphoglycerate mutase family. Homodimer. Liver.

The catalysed reaction is beta-D-fructose 2,6-bisphosphate + H2O = beta-D-fructose 6-phosphate + phosphate. The enzyme catalyses beta-D-fructose 6-phosphate + ATP = beta-D-fructose 2,6-bisphosphate + ADP + H(+). With respect to regulation, phosphorylation at Ser-33 inhibits the kinase and activates the bisphosphatase. Its function is as follows. Synthesis and degradation of fructose 2,6-bisphosphate. This is 6-phosphofructo-2-kinase/fructose-2,6-bisphosphatase 1 from Homo sapiens (Human).